The chain runs to 80 residues: UPF0154 protein SaurJH1_1431 (80 aa).

Residues W4 to L24 traverse the membrane as a helical segment.

Belongs to the UPF0154 family.

It localises to the cell membrane. The polypeptide is UPF0154 protein SaurJH1_1431 (Staphylococcus aureus (strain JH1)).